The chain runs to 293 residues: MFTRLAPRLQPQLLSTKRVLTTRYPTLVRTPIFHQTPIQIIKRNYVIVHKERKKEPVIRYLFYMLVASWVAIYFVANRVDKKKPPKQSFTEREFQSYEEETGLKRRNKLISHHMNSKYKFYVIPYVHDEEELNRVANLLQHKDENATVKIIDPAQLIEEQKKDEGMKYHYLLEDLDEQGKPYPPGLITAVIKQEIYKILNTREGTFDTNFLIKNYPQTTNEAIKFENDISDIQKCLILHYDMLNELPKNKTDEEQRAIKNVDGYFSSVGKSKTLVEKFDPMDKEFEDIILEDI.

The N-terminal 27 residues, 1-27, are a transit peptide targeting the mitochondrion; it reads MFTRLAPRLQPQLLSTKRVLTTRYPTL. A helical membrane pass occupies residues 57–76; the sequence is VIRYLFYMLVASWVAIYFVA.

Belongs to the AIM36 family.

The protein localises to the mitochondrion membrane. The polypeptide is Altered inheritance of mitochondria protein 36, mitochondrial (AIM36) (Candida dubliniensis (strain CD36 / ATCC MYA-646 / CBS 7987 / NCPF 3949 / NRRL Y-17841) (Yeast)).